Here is a 563-residue protein sequence, read N- to C-terminus: Dihydroxy-acid dehydratase (563 aa).

Asp78 provides a ligand contact to Mg(2+). Cys119 contacts [2Fe-2S] cluster. Residues Asp120 and Lys121 each contribute to the Mg(2+) site. Lys121 is subject to N6-carboxylysine. [2Fe-2S] cluster is bound at residue Cys191. Glu442 provides a ligand contact to Mg(2+). The active-site Proton acceptor is Ser468.

It belongs to the IlvD/Edd family. Homodimer. [2Fe-2S] cluster is required as a cofactor. It depends on Mg(2+) as a cofactor.

The enzyme catalyses (2R)-2,3-dihydroxy-3-methylbutanoate = 3-methyl-2-oxobutanoate + H2O. It carries out the reaction (2R,3R)-2,3-dihydroxy-3-methylpentanoate = (S)-3-methyl-2-oxopentanoate + H2O. It functions in the pathway amino-acid biosynthesis; L-isoleucine biosynthesis; L-isoleucine from 2-oxobutanoate: step 3/4. It participates in amino-acid biosynthesis; L-valine biosynthesis; L-valine from pyruvate: step 3/4. Functions in the biosynthesis of branched-chain amino acids. Catalyzes the dehydration of (2R,3R)-2,3-dihydroxy-3-methylpentanoate (2,3-dihydroxy-3-methylvalerate) into 2-oxo-3-methylpentanoate (2-oxo-3-methylvalerate) and of (2R)-2,3-dihydroxy-3-methylbutanoate (2,3-dihydroxyisovalerate) into 2-oxo-3-methylbutanoate (2-oxoisovalerate), the penultimate precursor to L-isoleucine and L-valine, respectively. In Desulfitobacterium hafniense (strain DSM 10664 / DCB-2), this protein is Dihydroxy-acid dehydratase.